Here is a 506-residue protein sequence, read N- to C-terminus: UDP-N-acetylmuramoyl-L-alanyl-D-glutamate--2,6-diaminopimelate ligase (506 aa).

Residue Ser-38 participates in UDP-N-acetyl-alpha-D-muramoyl-L-alanyl-D-glutamate binding. Residue 124–130 participates in ATP binding; sequence GTNGKTS. UDP-N-acetyl-alpha-D-muramoyl-L-alanyl-D-glutamate contacts are provided by residues 166–167, Ser-193, and Arg-201; that span reads TT. Lys-233 carries the post-translational modification N6-carboxylysine. Residues Arg-401, 425 to 428, Gly-477, and Glu-481 each bind meso-2,6-diaminopimelate; that span reads DNPR. A Meso-diaminopimelate recognition motif motif is present at residues 425-428; it reads DNPR.

This sequence belongs to the MurCDEF family. MurE subfamily. It depends on Mg(2+) as a cofactor. Carboxylation is probably crucial for Mg(2+) binding and, consequently, for the gamma-phosphate positioning of ATP.

The protein resides in the cytoplasm. The catalysed reaction is UDP-N-acetyl-alpha-D-muramoyl-L-alanyl-D-glutamate + meso-2,6-diaminopimelate + ATP = UDP-N-acetyl-alpha-D-muramoyl-L-alanyl-gamma-D-glutamyl-meso-2,6-diaminopimelate + ADP + phosphate + H(+). The protein operates within cell wall biogenesis; peptidoglycan biosynthesis. Functionally, catalyzes the addition of meso-diaminopimelic acid to the nucleotide precursor UDP-N-acetylmuramoyl-L-alanyl-D-glutamate (UMAG) in the biosynthesis of bacterial cell-wall peptidoglycan. This chain is UDP-N-acetylmuramoyl-L-alanyl-D-glutamate--2,6-diaminopimelate ligase, found in Leptospira interrogans serogroup Icterohaemorrhagiae serovar copenhageni (strain Fiocruz L1-130).